The primary structure comprises 259 residues: Thiazole synthase (259 aa).

The active-site Schiff-base intermediate with DXP is the Lys99. 1-deoxy-D-xylulose 5-phosphate contacts are provided by residues Gly161, 187–188 (AG), and 209–210 (NT).

The protein belongs to the ThiG family. As to quaternary structure, homotetramer. Forms heterodimers with either ThiH or ThiS.

The protein resides in the cytoplasm. The catalysed reaction is [ThiS sulfur-carrier protein]-C-terminal-Gly-aminoethanethioate + 2-iminoacetate + 1-deoxy-D-xylulose 5-phosphate = [ThiS sulfur-carrier protein]-C-terminal Gly-Gly + 2-[(2R,5Z)-2-carboxy-4-methylthiazol-5(2H)-ylidene]ethyl phosphate + 2 H2O + H(+). It functions in the pathway cofactor biosynthesis; thiamine diphosphate biosynthesis. In terms of biological role, catalyzes the rearrangement of 1-deoxy-D-xylulose 5-phosphate (DXP) to produce the thiazole phosphate moiety of thiamine. Sulfur is provided by the thiocarboxylate moiety of the carrier protein ThiS. In vitro, sulfur can be provided by H(2)S. The protein is Thiazole synthase of Nautilia profundicola (strain ATCC BAA-1463 / DSM 18972 / AmH).